A 396-amino-acid chain; its full sequence is Seminal vesicle major clotting proteins (396 aa).

An N-terminal signal peptide occupies residues 1–21; it reads MKSTIFFILSLLLMLENQAAG. Residues 45 to 178 are disordered; that stretch reads MEEAVSGSGL…ASSVDHRKKG (134 aa). Positions 60-152 are enriched in basic and acidic residues; sequence RGSDREESVG…RVSVRHERVE (93 aa). 3 SVP-3/-4 repeat repeats span residues 65-88, 89-112, and 113-136; these read EESV…RSSV, EEPE…RHNV, and EEPE…RHSA. One copy of the SVP-3/-4 repeat; truncated repeat lies at 137-157; that stretch reads EEPEGERVSVRHERVEKTHKR. Positions 177-192 are excised as a propeptide; the sequence is KGHIRFKRQDPIAALA. 8 SVP-1 clotting repeats span residues 194–217, 218–241, 242–265, 266–289, 290–313, 314–337, 338–361, and 362–385; these read IEGQ…ERFS, VKGQ…ERFS, VTGQ…ERFS, MTGQ…ERFS, and VSGQ…SGFS. Residues 194-396 form a 9 X tandem repeats of SVP-1 like motif region; it reads IEGQDAVKDS…KGQGSLKGLI (203 aa). The disordered stretch occupies residues 377–396; it reads QESVQSGFSVKGQGSLKGLI. An SVP-1 clotting 9; truncated repeat occupies 386-396; sequence VKGQGSLKGLI.

It to the SVP-2 precursor, particularly in regions where protein processing must occur. In terms of processing, SVP-3 may be a post-translationally modified form of SVP-4. Covalent clotting of SVP-1 is catalyzed by a transglutaminase secreted by the anterior prostate through the formation of gamma-glutamyl-epsilon-lysine cross-links. The conserved 2 Lys and 1 Gln residues per functional unit seem to be the residues involved in the formation of those cross-links.

The protein resides in the secreted. In terms of biological role, SVP-1 serves as substrate in the formation of the copulatory plug. SVP-3 and SVP-4 may also contribute to the clot. The polypeptide is Seminal vesicle major clotting proteins (Cavia porcellus (Guinea pig)).